The chain runs to 504 residues: Histidine ammonia-lyase (504 aa).

The 5-imidazolinone (Ala-Gly) cross-link spans 141 to 143 (ASG). A 2,3-didehydroalanine (Ser) modification is found at S142.

It belongs to the PAL/histidase family. Post-translationally, contains an active site 4-methylidene-imidazol-5-one (MIO), which is formed autocatalytically by cyclization and dehydration of residues Ala-Ser-Gly.

It localises to the cytoplasm. It catalyses the reaction L-histidine = trans-urocanate + NH4(+). Its pathway is amino-acid degradation; L-histidine degradation into L-glutamate; N-formimidoyl-L-glutamate from L-histidine: step 1/3. This Geobacillus thermodenitrificans (strain NG80-2) protein is Histidine ammonia-lyase.